We begin with the raw amino-acid sequence, 465 residues long: Hydroxyacid-oxoacid transhydrogenase, mitochondrial (465 aa).

N6-acetyllysine is present on K443. The residue at position 450 (S450) is a Phosphoserine.

It belongs to the iron-containing alcohol dehydrogenase family. Hydroxyacid-oxoacid transhydrogenase subfamily. In terms of tissue distribution, expressed in white and brown adipose tissues, liver, and kidney. Expression is differentiation-dependent during in vitro brown and white adipogenesis.

The protein resides in the mitochondrion. The enzyme catalyses (S)-3-hydroxybutanoate + 2-oxoglutarate = (R)-2-hydroxyglutarate + acetoacetate. It carries out the reaction 4-hydroxybutanoate + 2-oxoglutarate = (R)-2-hydroxyglutarate + succinate semialdehyde. In terms of biological role, catalyzes the cofactor-independent reversible oxidation of gamma-hydroxybutyrate (GHB) to succinic semialdehyde (SSA) coupled to reduction of 2-ketoglutarate (2-KG) to D-2-hydroxyglutarate (D-2-HG). L-3-hydroxybutyrate (L-3-OHB) is also a substrate for HOT when using 2-KG as hydrogen acceptor, resulting in the formation of D-2-HG. The sequence is that of Hydroxyacid-oxoacid transhydrogenase, mitochondrial (Adhfe1) from Mus musculus (Mouse).